The primary structure comprises 377 residues: Glutamate 5-kinase (377 aa).

Lysine 17 is a binding site for ATP. 3 residues coordinate substrate: serine 56, aspartate 143, and asparagine 155. 217-223 (SGGMFSK) serves as a coordination point for ATP. The 79-residue stretch at 282 to 360 (AGDLVIDDGA…CEIESILGKC (79 aa)) folds into the PUA domain.

It belongs to the glutamate 5-kinase family.

The protein localises to the cytoplasm. It catalyses the reaction L-glutamate + ATP = L-glutamyl 5-phosphate + ADP. Its pathway is amino-acid biosynthesis; L-proline biosynthesis; L-glutamate 5-semialdehyde from L-glutamate: step 1/2. Catalyzes the transfer of a phosphate group to glutamate to form L-glutamate 5-phosphate. This Maridesulfovibrio salexigens (strain ATCC 14822 / DSM 2638 / NCIMB 8403 / VKM B-1763) (Desulfovibrio salexigens) protein is Glutamate 5-kinase.